The primary structure comprises 380 residues: Cytochrome b (380 aa).

4 consecutive transmembrane segments (helical) span residues Phe34–Met54, Trp78–Ile99, Trp114–Leu134, and Phe179–Thr199. Heme b-binding residues include His84 and His98. 2 residues coordinate heme b: His183 and His197. His202 provides a ligand contact to a ubiquinone. Transmembrane regions (helical) follow at residues Thr227–Ala247, Leu289–His309, Leu321–Ser341, and Phe348–Pro368.

Belongs to the cytochrome b family. In terms of assembly, the cytochrome bc1 complex contains 11 subunits: 3 respiratory subunits (MT-CYB, CYC1 and UQCRFS1), 2 core proteins (UQCRC1 and UQCRC2) and 6 low-molecular weight proteins (UQCRH/QCR6, UQCRB/QCR7, UQCRQ/QCR8, UQCR10/QCR9, UQCR11/QCR10 and a cleavage product of UQCRFS1). This cytochrome bc1 complex then forms a dimer. Heme b serves as cofactor.

It localises to the mitochondrion inner membrane. Component of the ubiquinol-cytochrome c reductase complex (complex III or cytochrome b-c1 complex) that is part of the mitochondrial respiratory chain. The b-c1 complex mediates electron transfer from ubiquinol to cytochrome c. Contributes to the generation of a proton gradient across the mitochondrial membrane that is then used for ATP synthesis. The sequence is that of Cytochrome b (MT-CYB) from Aphanotriccus audax (Black-billed flycatcher).